Reading from the N-terminus, the 641-residue chain is ATP-dependent zinc metalloprotease FtsH (641 aa).

The Cytoplasmic portion of the chain corresponds to 1 to 16; that stretch reads MNKQQKPKRSPLRPDY. A helical membrane pass occupies residues 17–37; sequence LVIVIIILLAIGMYFFFTEMM. Over 38–131 the chain is Extracellular; sequence APKVKQFDEF…VSFVPHVSVD (94 aa). A helical membrane pass occupies residues 132–152; that stretch reads FWNIISTLLLIAAPIVLVVIM. Over 153 to 641 the chain is Cytoplasmic; the sequence is FRSMSSQSNK…EVEEDSKKSE (489 aa). 222–229 lines the ATP pocket; that stretch reads GQPGTGKT. Histidine 444 contacts Zn(2+). Residue glutamate 445 is part of the active site. Zn(2+)-binding residues include histidine 448 and aspartate 520.

The protein in the central section; belongs to the AAA ATPase family. It in the C-terminal section; belongs to the peptidase M41 family. Homohexamer. It depends on Zn(2+) as a cofactor.

It localises to the cell membrane. Its function is as follows. Acts as a processive, ATP-dependent zinc metallopeptidase for both cytoplasmic and membrane proteins. Plays a role in the quality control of integral membrane proteins. This is ATP-dependent zinc metalloprotease FtsH from Acholeplasma laidlawii (strain PG-8A).